A 504-amino-acid polypeptide reads, in one-letter code: ATP synthase subunit alpha (504 aa).

169–176 provides a ligand contact to ATP; that stretch reads GDRGTGKT.

The protein belongs to the ATPase alpha/beta chains family. F-type ATPases have 2 components, CF(1) - the catalytic core - and CF(0) - the membrane proton channel. CF(1) has five subunits: alpha(3), beta(3), gamma(1), delta(1), epsilon(1). CF(0) has three main subunits: a(1), b(2) and c(9-12). The alpha and beta chains form an alternating ring which encloses part of the gamma chain. CF(1) is attached to CF(0) by a central stalk formed by the gamma and epsilon chains, while a peripheral stalk is formed by the delta and b chains.

Its subcellular location is the cell inner membrane. It carries out the reaction ATP + H2O + 4 H(+)(in) = ADP + phosphate + 5 H(+)(out). In terms of biological role, produces ATP from ADP in the presence of a proton gradient across the membrane. The alpha chain is a regulatory subunit. The polypeptide is ATP synthase subunit alpha (Leptospira biflexa serovar Patoc (strain Patoc 1 / Ames)).